Consider the following 124-residue polypeptide: Acidic phospholipase A2 (124 aa).

7 disulfide bridges follow: Cys26-Cys116, Cys28-Cys44, Cys43-Cys95, Cys49-Cys124, Cys50-Cys88, Cys57-Cys81, and Cys75-Cys86. 3 residues coordinate Ca(2+): Tyr27, Gly29, and Gly31. His47 is an active-site residue. A Ca(2+)-binding site is contributed by Asp48. Residue Asp89 is part of the active site.

This sequence belongs to the phospholipase A2 family. Group II subfamily. D49 sub-subfamily. It depends on Ca(2+) as a cofactor. In terms of tissue distribution, expressed by the venom gland.

It localises to the secreted. The catalysed reaction is a 1,2-diacyl-sn-glycero-3-phosphocholine + H2O = a 1-acyl-sn-glycero-3-phosphocholine + a fatty acid + H(+). Snake venom phospholipase A2 (PLA2) that inhibits ADP-induced platelet aggregation. PLA2 catalyzes the calcium-dependent hydrolysis of the 2-acyl groups in 3-sn-phosphoglycerides. This Gloydius ussuriensis (Ussuri mamushi) protein is Acidic phospholipase A2.